The following is a 202-amino-acid chain: FMN-dependent NADH:quinone oxidoreductase 2 (202 aa).

FMN is bound by residues serine 9, serine 15–serine 17, methionine 93–phenylalanine 96, and serine 137–glycine 140.

Belongs to the azoreductase type 1 family. Homodimer. The cofactor is FMN.

It carries out the reaction 2 a quinone + NADH + H(+) = 2 a 1,4-benzosemiquinone + NAD(+). It catalyses the reaction N,N-dimethyl-1,4-phenylenediamine + anthranilate + 2 NAD(+) = 2-(4-dimethylaminophenyl)diazenylbenzoate + 2 NADH + 2 H(+). Its function is as follows. Quinone reductase that provides resistance to thiol-specific stress caused by electrophilic quinones. Functionally, also exhibits azoreductase activity. Catalyzes the reductive cleavage of the azo bond in aromatic azo compounds to the corresponding amines. This is FMN-dependent NADH:quinone oxidoreductase 2 from Bradyrhizobium diazoefficiens (strain JCM 10833 / BCRC 13528 / IAM 13628 / NBRC 14792 / USDA 110).